Consider the following 447-residue polypeptide: Signal recognition particle 54 kDa protein (447 aa).

GTP contacts are provided by residues 103–110, 185–189, and 245–248; these read GVQGSGKT, DTAGR, and TKMD.

It belongs to the GTP-binding SRP family. SRP54 subfamily. Part of the signal recognition particle protein translocation system, which is composed of SRP and FtsY. Archaeal SRP consists of a 7S RNA molecule of 300 nucleotides and two protein subunits: SRP54 and SRP19.

The protein resides in the cytoplasm. The catalysed reaction is GTP + H2O = GDP + phosphate + H(+). Involved in targeting and insertion of nascent membrane proteins into the cytoplasmic membrane. Binds to the hydrophobic signal sequence of the ribosome-nascent chain (RNC) as it emerges from the ribosomes. The SRP-RNC complex is then targeted to the cytoplasmic membrane where it interacts with the SRP receptor FtsY. The chain is Signal recognition particle 54 kDa protein from Saccharolobus solfataricus (strain ATCC 35092 / DSM 1617 / JCM 11322 / P2) (Sulfolobus solfataricus).